Here is a 332-residue protein sequence, read N- to C-terminus: MAENDGETIVPDEQCNLTASTPMKSSGLEQVESPKERKTSMVECDDEGNPSSGTPDESPKQLTPHSIPPRRRRSPRRPEVSASRLPLKVLNQIFQYLPLKDLRSAMLTCHSWNNALSMEDSDIWQYLLGKKLPEAAVSDPFLLAELGSAKKKLRAWYFAWNTSDISRNNYIRTNGFTVHRQPVAQSTDGVRGKRGISKGVHAFDITWDGPLGTVAVVGIATKHAALHCVGYVALLGSDDQSWGWNLVDNVLMHNGAQLGVYPKMNNPPKYEVGDKIRLIIDCDTHVAYFERNSEFLGIAFNHIPPLRLYPAVCAVYGNTEVTMVYVGSPQMG.

The disordered stretch occupies residues 1 to 82; it reads MAENDGETIV…RSPRRPEVSA (82 aa). 2 stretches are compositionally biased toward polar residues: residues 15–28 and 49–64; these read CNLTASTPMKSSGL and NPSSGTPDESPKQLTP. Positions 79 to 127 constitute an F-box domain; sequence EVSASRLPLKVLNQIFQYLPLKDLRSAMLTCHSWNNALSMEDSDIWQYL. A B30.2/SPRY domain is found at 138–330; it reads SDPFLLAELG…VTMVYVGSPQ (193 aa).

The protein belongs to the FBXO45/Fsn family. In terms of assembly, component of an SCF (SKP1-CUL1-F-box protein) E3 ubiquitin ligase complex composed of cul-1, fsn-1, rpm-1 and skr-1. Interacts (via SPRY domain) with scd-2 (via cytoplasmic domain). Interacts (via SPRY domain) with convertase egl-3 (via C-terminus). Expressed in GABAergic neuromuscular junctions (NMJs).

The protein localises to the synapse. It functions in the pathway protein modification; protein ubiquitination. Its function is as follows. Component of a SCF (SKP1-CUL1-F-box protein) E3 ubiquitin ligase complex which is required for the restriction and/or maturation of synapses in GABAergic neuromuscular junction (NMJ) presynaptic neurons. Promotes NRJ synapse development and synaptic transmission by negatively regulating the daf-2/InsR pathway in muscles. By targeting convertase egl-3 for degradation, negatively modulates insulin-like protein ins-4 and ins-6 processing. May stabilize synapse formation by promoting the down-regulation of scd-2. Regulates axon termination in PLM and ALM neurons. The sequence is that of F-box/SPRY domain-containing protein 1 (fsn-1) from Caenorhabditis elegans.